Consider the following 1283-residue polypeptide: MAEHKNGVATNGYEKKSSPASSSTKSEAKPLPNGDKKDGIVKSFKQLRVASKRPLPKEMGDGSYRVVENRPGLKQDIRRLRGRDLKTLLEIVKAKVKGETQQDDKTMIMERTIQLVANLSDHSKVQESLTNSFISQLWNSIDHPPMLYMGDKFRFRQPDGSNNNPYLPQLGAARTPYSRTVRPKGMSLGAQPDPEAIFESVFARDAFRKNPNNVSSILWYWATIIIHDLFWTNLQDPNQNDSSSYLDLAPLYGSTEKDRDSIRTFKDGQLKPDCFADKRLIGNPPGVPILLIMFNRFHNHVATNLADINEGGRFSKPAEHLSPEAADAAWKKRDTELFETARLVTSGLYINITLIDYVRNIINLNRVDTTWTLDPRQEMGVSVGTKDLSESGTGNVVSAEFNLCYRWHSCLSEMDDKWVQDFYTELLGENYGPMNLQTMMKALKAFEASVADEPSERTFGGFKRGPDGKFNDDELVEALATAIEQPGGAFGGRNVPRIMKPIEMLGIMRGRKWNLAGLNEFRKHFGLKAYETFEDINSDPSVADALRNLYQHPDYVELYPGIVAEEAKTPMVPGVGIAPTYTISRVVLSDAVALVRGDRYYTTDYNPRHLTNWGYKEVDYDLKVNHGCVFYKLFLRAFPQHFKGNSVYAHYPMVIPSENKKILTNIKRADRFDFSRPEPTATRINIIGYNAAKYILEDQQKYRVCWEEGLKHLMGEAGGRFMLSGDTALHAQQRKCMGKLLYNDTWRNAVKSFYATTAEKLLAEKSYRLAGKMQVDVVRDVGNVAHTHFVARMFNLPLKTSENPKGVFSEQELYMILAVIFVCIFFDIDPAKSFPLRQGAREVAQKLGGIIEMNVKLANSIGVKGLFTSKPDKNDDPLARYGENMAKGLKKAGLSTEDIVWSQILPTAGAMVPNQAQVFAQTLDWYLSPAGEKYRPELARIAALETGDETDALLLGYAMEGIRMAGTFGLYREATGPDTIHEDDGRSIPVNAGDRVFVSFVQAAQDPKIFPNPGVVDPKRPLDKYIHYGVGPHACLGRDISQVALTELFRAVFRKKGVRRVPGAQGELKKVPRPGGFFVYMTEDWGSIWPFPTSMKITWDDGCGTDLFTLLFWCRSVPWWDLLPETTQAAPFIISSFQSQQIYSPAEIAAVLALMAFESGDFQYKRNHYPGRPGQGTANMQMPNYNLLYAKSIPELAKGWQGIESVEGLSDQELGDLLDDVTVDKYNFGSGPWFLKTQCKEDVRQAFKTDVDTGFQKYIEECVGTDLQPRLEYFQRAKTAFGL.

The tract at residues 1–64 (MAEHKNGVAT…LPKEMGDGSY (64 aa)) is disordered. Residues 130–476 (TNSFISQLWN…DGKFNDDELV (347 aa)) form a fatty acid alpha-dioxygenase region. His-227 provides a ligand contact to heme b. Residue Tyr-405 is part of the active site. His-408 provides a ligand contact to heme b. Residues 684–1108 (INIIGYNAAK…WDDGCGTDLF (425 aa)) form an epoxy alcohol synthase region. Residue Cys-1035 coordinates heme.

The protein in the N-terminal section; belongs to the peroxidase family. This sequence in the C-terminal section; belongs to the cytochrome P450 family. Homotetramer. Requires heme b as cofactor. Heme serves as cofactor.

The enzyme catalyses (9Z,12Z)-octadecadienoate + O2 = (8E,10R,12Z)-10-hydroperoxyoctadeca-8,12-dienoate. The catalysed reaction is (8E,10R,12Z)-10-hydroperoxyoctadeca-8,12-dienoate = (12S,13R)-epoxy-(10R)-hydroxy-(8E)-octadecenoate. It carries out the reaction (9Z)-octadecenoate + O2 = (8R)-hydroperoxy-(9Z)-octadecenoate. Bifunctional dioxygenase (DOX)-epoxy alcohol synthase (EAS) that converts linoleic acid (18:2n-6) sequentially to 10(R)-hydroperoxy-8(E),12(Z)-octadecadienoic acid (10R-HPODE) and 10R-HPODE further to 12(13)-epoxy-10-hydroxy-8(E)-octa-decenoic acid as the end product. Linoleic acid is oxidized mainly to the R stereoisomer of 10-HPODE. The dioxygenase domain is also able to oygenate position C-8 of linoleic acid to produce 8(R)-hydroperoxy-8(E),12(Z)-octadecadienoic acid (8R-HPODE). The chain is Bifunctional dioxygenase (DOX)-epoxy alcohol synthase (EAS) from Fusarium oxysporum (strain Fo5176) (Fusarium vascular wilt).